The following is a 300-amino-acid chain: Ribosomal protein bS6--L-glutamate ligase (300 aa).

An ATP-grasp domain is found at 104 to 287 (MQLLARQGID…IAGKMIRWIE (184 aa)). ATP-binding positions include Lys-141, 178-179 (EY), Asp-187, and 211-213 (RSN). Positions 248, 260, and 262 each coordinate Mg(2+). 3 residues coordinate Mn(2+): Asp-248, Glu-260, and Asn-262.

This sequence belongs to the RimK family. It depends on Mg(2+) as a cofactor. Mn(2+) serves as cofactor.

Functionally, an L-glutamate ligase that catalyzes the ATP-dependent post-translational addition of glutamate residues to the C-terminus of ribosomal protein bS6 (RpsF). Is also able to catalyze the synthesis of poly-alpha-glutamate in vitro, via ATP hydrolysis from unprotected glutamate as substrate. The number of glutamate residues added to either RpsF or to poly-alpha-glutamate changes with pH. The polypeptide is Ribosomal protein bS6--L-glutamate ligase (Escherichia coli O139:H28 (strain E24377A / ETEC)).